The chain runs to 281 residues: MATVTAALVKELRERTGAGMMECKKALVEANADIELAIENMRKSGAAKAAKKAGNVAAEGAIIIKEENGVAVLLEVNCQTDFVAKDGNFTAFADKVALDALATKATAEELVAKFEEERVALVAKIGENINIRRVAYVEGTAIASYRHGEKIGVVVAGEGDAETLKHVAMHVAASKPEFVNPEDVPADVVAKEKEVQVEIAMNEGKPQEIAEKMVIGRMKKFTGEISLTGQAFIMEPKKSVGEMLKEKGASVATFVRLEVGEGIEKAAEMSFAEEVALAQKG.

The interval 80-83 is involved in Mg(2+) ion dislocation from EF-Tu; it reads TDFV.

This sequence belongs to the EF-Ts family.

Its subcellular location is the cytoplasm. In terms of biological role, associates with the EF-Tu.GDP complex and induces the exchange of GDP to GTP. It remains bound to the aminoacyl-tRNA.EF-Tu.GTP complex up to the GTP hydrolysis stage on the ribosome. This Vibrio campbellii (strain ATCC BAA-1116) protein is Elongation factor Ts.